The sequence spans 355 residues: Putative cyclin-A3-1 (355 aa).

Belongs to the cyclin family. Cyclin AB subfamily.

This chain is Putative cyclin-A3-1 (CYCA3-1), found in Arabidopsis thaliana (Mouse-ear cress).